Reading from the N-terminus, the 495-residue chain is UDP-glycosyltransferase 73C25 (495 aa).

23 to 26 lines the UDP-alpha-D-glucose pocket; sequence GHMI. The Proton acceptor role is filled by His-24. The Charge relay role is filled by Asp-129. UDP-alpha-D-glucose-binding positions include 355–358, 373–381, and 397–398; these read WSPQ, HCGWNSTLE, and DQ.

It belongs to the UDP-glycosyltransferase family.

Catalyzes the transfer of a glucose (Glc) moiety from UDP-Glc to the C-28 carboxylic group of oleanolate 3-O-beta-D-glucoside to form oleanolate 3,28-O-beta-D-diglucoside. The polypeptide is UDP-glycosyltransferase 73C25 (Barbarea vulgaris (Yellow rocket)).